A 78-amino-acid chain; its full sequence is Serine rich endogenous peptide 12 (78 aa).

The first 24 residues, 1–24 (MRNTISSKMGQVLIVLLLLCTVLC), serve as a signal peptide directing secretion. The propeptide at 25-43 (RTESALPSGQHSVLLTGRR) is removed in mature form. The tract at residues 47–78 (SGASGPVRSSQSSQAGGRFNDADPIAIDYGKY) is disordered. The SCOOP motif motif lies at 50–64 (SGPVRSSQSSQAGGR). Residues 56-58 (SQS) carry the SxS motif essential for MIK2 binding motif.

Belongs to the serine rich endogenous peptide (SCOOP) phytocytokine family. Interacts with MIK2 (via extracellular leucine-rich repeat domain); this interaction triggers the formation of complex between MIK2 and the BAK1/SERK3 and SERK4 coreceptors, and subsequent BAK1 activation by phosphorylation on 'Ser-612'. Mostly expressed in the whole root system, and, to a lower extent, in seedlings shoots.

It localises to the cell membrane. Its subcellular location is the secreted. It is found in the extracellular space. The protein resides in the apoplast. Its function is as follows. Brassicaceae-specific phytocytokine (plant endogenous peptide released into the apoplast) perceived by MIK2 in a BAK1/SERK3 and SERK4 coreceptors-dependent manner, that modulates various physiological and antimicrobial processes including root growth prevention, phospholipid signaling pathway activation (e.g. accumulation of phosphatidic acid (PA), but transient reduction of phosphatidylinositol 4,5-bisphosphate (PIP(2)) levels) and reactive oxygen species (ROS) response regulation. Moderates primary root growth, and regulates root meristems and cell elongation; this root growth regulation is associated with the modulation of ROS metabolism and alteration of cell wall structure, and depends on variations in many genes expression. Promotes ROS (e.g. superoxide anion O(2) and hydrogen peroxide H(2)O(2)) production and MAPK (e.g. MPK3, MPK4 and MPK6) activation in a MIK2-dependent manner, thus leading to the up-regulation of immune-related marker genes (e.g. WRKY30, WRKY33 and CYP81F2). Involved in biotic and oxidative stress responses; acts as a negative regulator of defense against necrotrophic pathogens such as the bacteria Erwinia amylovora and the fungus Alternaria brassicicola. Able to prime defense responses against the pathogenic bacteria Pseudomonas syringae pv. tomato DC3000. Contributes to the triggering of defense responses toward generalist herbivores such as Spodoptera littoralis, probably via the activation of jasmonate and indole glucosinolate biosynthesis. Triggers the expression of several PROSCOOP genes (e.g. PROSCOOP3, PROSCOOP7, PROSCOOP12 and PROSCOOP13). This chain is Serine rich endogenous peptide 12, found in Arabidopsis thaliana (Mouse-ear cress).